We begin with the raw amino-acid sequence, 224 residues long: Large ribosomal subunit protein bL25 (224 aa).

Positions 190–224 (EPAPAAEGAAPAEGAAAAAAGGKPAAKTAKPAAKK) are disordered.

The protein belongs to the bacterial ribosomal protein bL25 family. CTC subfamily. Part of the 50S ribosomal subunit; part of the 5S rRNA/L5/L18/L25 subcomplex. Contacts the 5S rRNA. Binds to the 5S rRNA independently of L5 and L18.

This is one of the proteins that binds to the 5S RNA in the ribosome where it forms part of the central protuberance. This chain is Large ribosomal subunit protein bL25, found in Variovorax paradoxus (strain S110).